The sequence spans 373 residues: 3 beta-hydroxysteroid dehydrogenase/Delta 5--&gt;4-isomerase type 2 (373 aa).

Tyrosine 155 serves as the catalytic Proton acceptor. Residue lysine 159 participates in NAD(+) binding. Residues valine 288–valine 308 form a helical membrane-spanning segment.

Belongs to the 3-beta-HSD family. As to expression, high levels in adrenal gland, kidney and male liver. Low levels in female liver.

Its subcellular location is the endoplasmic reticulum membrane. The protein resides in the mitochondrion membrane. It catalyses the reaction a 3beta-hydroxy-Delta(5)-steroid + NAD(+) = a 3-oxo-Delta(5)-steroid + NADH + H(+). The catalysed reaction is a 3-oxo-Delta(5)-steroid = a 3-oxo-Delta(4)-steroid. The enzyme catalyses pregnenolone + NAD(+) = pregn-5-ene-3,20-dione + NADH + H(+). It carries out the reaction pregn-5-ene-3,20-dione = progesterone. It catalyses the reaction 3beta-hydroxyandrost-5-en-17-one + NAD(+) = androst-5-ene-3,17-dione + NADH + H(+). The catalysed reaction is androst-5-ene-3,17-dione = androst-4-ene-3,17-dione. The protein operates within lipid metabolism; steroid biosynthesis. 3-beta-HSD is a bifunctional enzyme, that catalyzes the oxidative conversion of Delta(5)-ene-3-beta-hydroxy steroid, and the oxidative conversion of ketosteroids. The 3-beta-HSD enzymatic system plays a crucial role in the biosynthesis of all classes of hormonal steroids. This chain is 3 beta-hydroxysteroid dehydrogenase/Delta 5--&gt;4-isomerase type 2 (HSD3B2), found in Mesocricetus auratus (Golden hamster).